A 239-amino-acid chain; its full sequence is Adapter protein MecA (239 aa).

Positions 118–128 (EQRTKEKEAQG) are enriched in basic and acidic residues. The segment at 118-137 (EQRTKEKEAQGSKRQKSSAR) is disordered.

Belongs to the MecA family. Homodimer.

Functionally, enables the recognition and targeting of unfolded and aggregated proteins to the ClpC protease or to other proteins involved in proteolysis. This chain is Adapter protein MecA, found in Staphylococcus aureus (strain Mu3 / ATCC 700698).